The sequence spans 119 residues: NADH-quinone oxidoreductase subunit A (119 aa).

3 helical membrane-spanning segments follow: residues 9 to 29, 63 to 83, and 88 to 108; these read VLLF…LGYV, LVAI…PWAV, and VGGA…VGFV.

The protein belongs to the complex I subunit 3 family. NDH-1 is composed of 14 different subunits. Subunits NuoA, H, J, K, L, M, N constitute the membrane sector of the complex.

Its subcellular location is the cell inner membrane. The catalysed reaction is a quinone + NADH + 5 H(+)(in) = a quinol + NAD(+) + 4 H(+)(out). NDH-1 shuttles electrons from NADH, via FMN and iron-sulfur (Fe-S) centers, to quinones in the respiratory chain. The immediate electron acceptor for the enzyme in this species is believed to be ubiquinone. Couples the redox reaction to proton translocation (for every two electrons transferred, four hydrogen ions are translocated across the cytoplasmic membrane), and thus conserves the redox energy in a proton gradient. This chain is NADH-quinone oxidoreductase subunit A, found in Delftia acidovorans (strain DSM 14801 / SPH-1).